We begin with the raw amino-acid sequence, 177 residues long: Large ribosomal subunit protein uL6 (177 aa).

The protein belongs to the universal ribosomal protein uL6 family. Part of the 50S ribosomal subunit.

This protein binds to the 23S rRNA, and is important in its secondary structure. It is located near the subunit interface in the base of the L7/L12 stalk, and near the tRNA binding site of the peptidyltransferase center. This is Large ribosomal subunit protein uL6 from Rickettsia felis (strain ATCC VR-1525 / URRWXCal2) (Rickettsia azadi).